Reading from the N-terminus, the 1435-residue chain is Protein clueless (1435 aa).

The disordered stretch occupies residues 1–97 (MALEMDSKNS…KPEGDGDADA (97 aa)). Positions 18–35 (AAAATTKTNKAKENNNLA) are enriched in low complexity. A compositionally biased stretch (polar residues) spans 38 to 50 (KKNQSQNLVNGNG). A compositionally biased stretch (basic residues) spans 58 to 67 (TKKKGKKNRN). The residue at position 266 (serine 266) is a Phosphoserine. Residues 420 to 662 (RAEDAFSSKL…RTFPPDVNFL (243 aa)) enclose the Clu domain. Composition is skewed to basic and acidic residues over residues 719–731 (KKPEETQSEEKKQ) and 752–762 (PNEKEKDTPVE). 2 disordered regions span residues 719-762 (KKPE…TPVE) and 952-998 (VSND…SSSS). Residues 959–975 (KKRGGNGGKHNKHKSSK) are compositionally biased toward basic residues. The span at 988–998 (NGGSTTSSSSS) shows a compositional bias: low complexity. 3 TPR repeats span residues 1096 to 1129 (AYNFYTTGQAKIQQGLFKEGYELISEALNLLNNV), 1222 to 1255 (ALIDSNISLILHALGEYELSLRFIEHALKLNLKY), and 1257 to 1290 (GNKAMHVAVSYHLMARTQSCMGDFRSALNNEKET). The tract at residues 1407–1435 (EVLAPQDNNKEQAATAQQLTNGDKVAVSS) is disordered. Residues 1417–1435 (EQAATAQQLTNGDKVAVSS) are compositionally biased toward polar residues.

This sequence belongs to the CLU family.

Its subcellular location is the cytoplasm. Functionally, mRNA-binding protein involved in proper cytoplasmic distribution of mitochondria. The sequence is that of Protein clueless from Drosophila persimilis (Fruit fly).